The sequence spans 566 residues: Putative lipase ATG15 (566 aa).

The Cytoplasmic segment spans residues 1 to 17 (MGSKHKKNASKSLRAFS). Residues 18–38 (FIILSASIALVYIFNPVKLIF) form a helical; Signal-anchor for type II membrane protein membrane-spanning segment. At 39-566 (PSSIIRFHHG…CVEWGDEEDA (528 aa)) the chain is on the lumenal side. Residues N264 and N348 are each glycosylated (N-linked (GlcNAc...) asparagine). Catalysis depends on S366, which acts as the Charge relay system. Residue N483 is glycosylated (N-linked (GlcNAc...) asparagine). Residues 507 to 545 (DSLDDEPPLPNPLRPGKPSTTSSSQHHTSTTTTTETSRP) are disordered. Over residues 522-543 (GKPSTTSSSQHHTSTTTTTETS) the composition is skewed to low complexity.

This sequence belongs to the AB hydrolase superfamily. Lipase family. As to quaternary structure, binds to both phosphatidylinositol (PI) and phosphatidylinositol 3,5-bisphosphate (PIP2).

It localises to the endosome. The protein localises to the multivesicular body membrane. It is found in the prevacuolar compartment membrane. The catalysed reaction is a triacylglycerol + H2O = a diacylglycerol + a fatty acid + H(+). In terms of biological role, lipase which is essential for lysis of subvacuolar cytoplasm to vacuole targeted bodies and intravacuolar autophagic bodies. Involved in the lysis of intravacuolar multivesicular body (MVB) vesicles. The intravacuolar membrane disintegration by ATG15 is critical to life span extension. This is Putative lipase ATG15 (ATG15) from Meyerozyma guilliermondii (strain ATCC 6260 / CBS 566 / DSM 6381 / JCM 1539 / NBRC 10279 / NRRL Y-324) (Yeast).